The sequence spans 516 residues: uncharacterized protein (516 aa).

S21 bears the Phosphoserine mark. A disordered region spans residues 46–74 (DLQSSMEDSNKANGNGEETTDGAEGVLQT). Residues 47 to 62 (LQSSMEDSNKANGNGE) are compositionally biased toward polar residues. WD repeat units lie at residues 182–227 (TFPL…AVYP), 252–292 (YHTD…CVKS), 295–335 (YHSD…APSS), 337–377 (QVTS…KSVW), 381–421 (AHDG…PKMV), and 426–468 (LDVG…GVRK). The span at 482-493 (ERIVQLEDRGAG) shows a compositional bias: basic and acidic residues. The tract at residues 482–516 (ERIVQLEDRGAGEDSSDDDDYEDIEDDDDQDAEMS) is disordered. The span at 495 to 516 (DSSDDDDYEDIEDDDDQDAEMS) shows a compositional bias: acidic residues. Residues S496 and S497 each carry the phosphoserine modification.

Its subcellular location is the cytoplasm. It localises to the nucleus. The protein localises to the nucleolus. This is an uncharacterized protein from Schizosaccharomyces pombe (strain 972 / ATCC 24843) (Fission yeast).